The chain runs to 223 residues: Chalcone--flavanone isomerase (223 aa).

Residues Thr50, Asn114, and Thr191 each coordinate substrate.

This sequence belongs to the chalcone isomerase family.

The catalysed reaction is a chalcone = a flavanone.. Its pathway is secondary metabolite biosynthesis; flavonoid biosynthesis. In terms of biological role, catalyzes the intramolecular cyclization of bicyclic chalcones into tricyclic (S)-flavanones. Responsible for the isomerization of 4,2',4',6'-tetrahydroxychalcone (also termed chalcone) into naringenin. This chain is Chalcone--flavanone isomerase (CHI), found in Pisum sativum (Garden pea).